The sequence spans 504 residues: Protoporphyrinogen oxidase, mitochondrial (504 aa).

Residues 20 to 25, 43 to 44, Lys-51, and 65 to 68 each bind FAD; these read GAGVSG, EA, and GANT. Positions 213–232 are disordered; the sequence is SPKNEKKQGPPKTSANKKRQ. Residues Val-264 and 473 to 475 contribute to the FAD site; that span reads LSV.

This sequence belongs to the protoporphyrinogen/coproporphyrinogen oxidase family. Protoporphyrinogen oxidase subfamily. FAD serves as cofactor.

The protein resides in the mitochondrion. It catalyses the reaction protoporphyrinogen IX + 3 O2 = protoporphyrin IX + 3 H2O2. The protein operates within porphyrin-containing compound metabolism; protoporphyrin-IX biosynthesis; protoporphyrin-IX from protoporphyrinogen-IX: step 1/1. Inhibited by the herbicide acifluorfen. In terms of biological role, catalyzes the 6-electron oxidation of protoporphyrinogen-IX to form protoporphyrin-IX. Functionally, provides precursor for the mitochondrial and plastidic heme synthesis and the predominant chlorophyll synthesis in plastids. The chain is Protoporphyrinogen oxidase, mitochondrial (PPXII) from Nicotiana tabacum (Common tobacco).